The chain runs to 276 residues: Large ribosomal subunit protein uL2 (276 aa).

2 disordered regions span residues 1-20 (MGIK…TTND) and 219-276 (TVRG…RRKK). The segment covering 7 to 20 (NPTTNGRRNMTTND) has biased composition (polar residues).

This sequence belongs to the universal ribosomal protein uL2 family. Part of the 50S ribosomal subunit. Forms a bridge to the 30S subunit in the 70S ribosome.

One of the primary rRNA binding proteins. Required for association of the 30S and 50S subunits to form the 70S ribosome, for tRNA binding and peptide bond formation. It has been suggested to have peptidyltransferase activity; this is somewhat controversial. Makes several contacts with the 16S rRNA in the 70S ribosome. This is Large ribosomal subunit protein uL2 from Bacillus mycoides (strain KBAB4) (Bacillus weihenstephanensis).